The sequence spans 150 residues: MAEANLDPVFQIQRVYLKDVSLEQPNSPEILLNQEQPGVDIQLGVDAKPVADGMFEVTVTATVHTKIADKTVFLVEAKQAGIFEIRNMQTDQLGAILGIACPQIVYPYLRSNVADVIQRGGFPPVHMAEINFQAMYEQQQAEAATPQIIV.

It belongs to the SecB family. As to quaternary structure, homotetramer, a dimer of dimers. One homotetramer interacts with 1 SecA dimer.

The protein resides in the cytoplasm. Its function is as follows. One of the proteins required for the normal export of preproteins out of the cell cytoplasm. It is a molecular chaperone that binds to a subset of precursor proteins, maintaining them in a translocation-competent state. It also specifically binds to its receptor SecA. This chain is Protein-export protein SecB, found in Polaromonas sp. (strain JS666 / ATCC BAA-500).